The sequence spans 328 residues: Nicotianamine synthase 1 (328 aa).

Belongs to the nicotianamine synthase (NAS)-like family. As to expression, in roots but not in leaves.

The catalysed reaction is 3 S-adenosyl-L-methionine = nicotianamine + 3 S-methyl-5'-thioadenosine + 3 H(+). Synthesizes nicotianamine, a polyamine that is the first intermediate in the synthesis of the phytosiderophores of the mugineic acid type found in gramineae which serves as a sensor for the physiological iron status within the plant, and/or might be involved in the transport of iron. In Hordeum vulgare (Barley), this protein is Nicotianamine synthase 1 (NAS1).